The chain runs to 430 residues: Adenylosuccinate synthetase (430 aa).

GTP is bound by residues 12–18 (GDEGKGK) and 40–42 (GHT). Aspartate 13 functions as the Proton acceptor in the catalytic mechanism. 2 residues coordinate Mg(2+): aspartate 13 and glycine 40. Residues 13–16 (DEGK), 38–41 (NAGH), threonine 130, arginine 144, glutamine 224, threonine 239, and arginine 303 each bind IMP. Histidine 41 acts as the Proton donor in catalysis. 299–305 (TTTGRKR) contributes to the substrate binding site. Residues arginine 305, 331-333 (KLD), and 413-415 (STS) each bind GTP.

Belongs to the adenylosuccinate synthetase family. As to quaternary structure, homodimer. The cofactor is Mg(2+).

The protein localises to the cytoplasm. The enzyme catalyses IMP + L-aspartate + GTP = N(6)-(1,2-dicarboxyethyl)-AMP + GDP + phosphate + 2 H(+). Its pathway is purine metabolism; AMP biosynthesis via de novo pathway; AMP from IMP: step 1/2. Functionally, plays an important role in the de novo pathway of purine nucleotide biosynthesis. Catalyzes the first committed step in the biosynthesis of AMP from IMP. This Ruegeria pomeroyi (strain ATCC 700808 / DSM 15171 / DSS-3) (Silicibacter pomeroyi) protein is Adenylosuccinate synthetase.